A 427-amino-acid polypeptide reads, in one-letter code: Putative FBD-associated F-box protein At3g50710 (427 aa).

The 53-residue stretch at 1–53 (MDRISNLSDDLLLKIVSSLPTKDVVVTMLLSKRWKFLWMMVPKLRFDDEFELE) folds into the F-box domain. The 51-residue stretch at 345 to 395 (HWEEPSSVPQCLLFHLNIFEWKYYNAGDEEKKVVAYILKNARQLKTATFSA) folds into the FBD domain.

This Arabidopsis thaliana (Mouse-ear cress) protein is Putative FBD-associated F-box protein At3g50710.